Consider the following 173-residue polypeptide: Myeloid-derived growth factor (173 aa).

Residues 1–31 form the signal peptide; the sequence is MAAPSGGWNGVGASLWAALLLGAVALRPAEA.

This sequence belongs to the MYDGF family. As to expression, expressed in eosinophils (at protein level). Expressed in bone marrow cells. Expressed in synovial tissue. Found in synovial fluid of patients with arthropaties.

Its subcellular location is the secreted. It localises to the endoplasmic reticulum-Golgi intermediate compartment. It is found in the endoplasmic reticulum. The protein localises to the golgi apparatus. Functionally, bone marrow-derived monocyte and paracrine-acting protein that promotes cardiac myocyte survival and adaptive angiogenesis for cardiac protection and/or repair after myocardial infarction (MI). Stimulates endothelial cell proliferation through a MAPK1/3-, STAT3- and CCND1-mediated signaling pathway. Inhibits cardiac myocyte apoptosis in a PI3K/AKT-dependent signaling pathway. Involved in endothelial cell proliferation and angiogenesis. The protein is Myeloid-derived growth factor of Homo sapiens (Human).